Here is a 135-residue protein sequence, read N- to C-terminus: Small ribosomal subunit protein uS12 (135 aa).

Residues 1-23 (MPTINQLVRKGRHSKTTKSDSPA) form a disordered region. A 3-methylthioaspartic acid modification is found at D102.

The protein belongs to the universal ribosomal protein uS12 family. Part of the 30S ribosomal subunit. Contacts proteins S8 and S17. May interact with IF1 in the 30S initiation complex.

In terms of biological role, with S4 and S5 plays an important role in translational accuracy. Functionally, interacts with and stabilizes bases of the 16S rRNA that are involved in tRNA selection in the A site and with the mRNA backbone. Located at the interface of the 30S and 50S subunits, it traverses the body of the 30S subunit contacting proteins on the other side and probably holding the rRNA structure together. The combined cluster of proteins S8, S12 and S17 appears to hold together the shoulder and platform of the 30S subunit. The sequence is that of Small ribosomal subunit protein uS12 from Lactobacillus gasseri (strain ATCC 33323 / DSM 20243 / BCRC 14619 / CIP 102991 / JCM 1131 / KCTC 3163 / NCIMB 11718 / NCTC 13722 / AM63).